The sequence spans 201 residues: Kinetochore protein SPC24 homolog (201 aa).

A coiled-coil region spans residues 78 to 133 (DIAAEDEIERLQKELDEEMEREFKLKDELRLVADELKDLNAQLSSIDEHKQSTKRK).

It belongs to the SPC24 family. As to quaternary structure, component of the NDC80 complex, which consists of NDC80, NUF2, SPC24 and SPC25. As to expression, highly expressed in actively dividing tissues, such as shoot apical meristem (SAM), root apical meristem (RAM), vasculature, newly emerging leaves and inflorescence shoots.

It is found in the chromosome. The protein localises to the centromere. Its function is as follows. Acts as a component of the essential kinetochore-associated NDC80 complex, which is required for chromosome segregation and spindle checkpoint activity to ensure proper cell division. Required for the maintenance of plant architecture. The sequence is that of Kinetochore protein SPC24 homolog from Arabidopsis thaliana (Mouse-ear cress).